Here is a 235-residue protein sequence, read N- to C-terminus: Calcium-activated potassium channel subunit beta-2 (235 aa).

Positions 1–45 (MFIWTSGRTSSSYRQDEKRNIYQKIRDHDLLDKRKTVTALKAGED) are ball and chain. The Cytoplasmic segment spans residues 1-46 (MFIWTSGRTSSSYRQDEKRNIYQKIRDHDLLDKRKTVTALKAGEDR). A helical membrane pass occupies residues 47–67 (AILLGLAMMVCSIMMYFLLGI). Topologically, residues 68–194 (TLLRSYMQSV…VILTKLYSSN (127 aa)) are extracellular. 3 N-linked (GlcNAc...) asparagine glycosylation sites follow: Asn88, Asn96, and Asn119. Residues 195 to 215 (VLFHSLFWPTCMMAGGVAIVA) traverse the membrane as a helical segment. At 216-235 (MVKLTQYLSLLCERIQRINR) the chain is on the cytoplasmic side.

It belongs to the KCNMB (TC 8.A.14.1) family. KCNMB2 subfamily. Interacts with KCNMA1 tetramer. There are probably 4 molecules of KCMNB2 per KCNMA1 tetramer. Post-translationally, N-glycosylated.

The protein localises to the membrane. Functionally, regulatory subunit of the calcium activated potassium KCNMA1 (maxiK) channel. Modulates the calcium sensitivity and gating kinetics of KCNMA1, thereby contributing to KCNMA1 channel diversity. Acts as a negative regulator that confers rapid and complete inactivation of KCNMA1 channel complex. In Mus musculus (Mouse), this protein is Calcium-activated potassium channel subunit beta-2 (Kcnmb2).